We begin with the raw amino-acid sequence, 325 residues long: ATP phosphoribosyltransferase (325 aa).

The protein belongs to the ATP phosphoribosyltransferase family. Long subfamily. Mg(2+) is required as a cofactor.

Its subcellular location is the cytoplasm. The enzyme catalyses 1-(5-phospho-beta-D-ribosyl)-ATP + diphosphate = 5-phospho-alpha-D-ribose 1-diphosphate + ATP. It functions in the pathway amino-acid biosynthesis; L-histidine biosynthesis; L-histidine from 5-phospho-alpha-D-ribose 1-diphosphate: step 1/9. Feedback inhibited by histidine. In terms of biological role, catalyzes the condensation of ATP and 5-phosphoribose 1-diphosphate to form N'-(5'-phosphoribosyl)-ATP (PR-ATP). Has a crucial role in the pathway because the rate of histidine biosynthesis seems to be controlled primarily by regulation of HisG enzymatic activity. The protein is ATP phosphoribosyltransferase of Nitrobacter winogradskyi (strain ATCC 25391 / DSM 10237 / CIP 104748 / NCIMB 11846 / Nb-255).